Reading from the N-terminus, the 390-residue chain is GTPase Obg (390 aa).

Residues 1–159 (MKFVDEASIL…RELLLELMLL (159 aa)) enclose the Obg domain. The tract at residues 127 to 147 (NTRFKSSVNRTPRQKTNGTPG) is disordered. A compositionally biased stretch (polar residues) spans 129-145 (RFKSSVNRTPRQKTNGT). An OBG-type G domain is found at 160–333 (ADVGMLGMPN…LCWDVMTFII (174 aa)). Residues 166–173 (GMPNAGKS), 191–195 (FTTLV), 213–216 (DIPG), 283–286 (NKID), and 314–316 (SAA) contribute to the GTP site. Residues serine 173 and threonine 193 each contribute to the Mg(2+) site.

The protein belongs to the TRAFAC class OBG-HflX-like GTPase superfamily. OBG GTPase family. As to quaternary structure, monomer. Mg(2+) serves as cofactor.

It is found in the cytoplasm. An essential GTPase which binds GTP, GDP and possibly (p)ppGpp with moderate affinity, with high nucleotide exchange rates and a fairly low GTP hydrolysis rate. Plays a role in control of the cell cycle, stress response, ribosome biogenesis and in those bacteria that undergo differentiation, in morphogenesis control. The polypeptide is GTPase Obg (Shigella dysenteriae serotype 1 (strain Sd197)).